We begin with the raw amino-acid sequence, 623 residues long: Pentatricopeptide repeat-containing protein At5g15340, mitochondrial (623 aa).

Residues 1–16 (MKCLSYQKVRLLLRHC) constitute a mitochondrion transit peptide. PPR repeat units follow at residues 42-72 (RSYL…IPLS), 75-109 (DNVD…RVEI), 110-144 (DDVS…GVLT), 145-179 (SVKV…SVVS), 180-206 (WTVV…MPER), 207-237 (NAVA…MVFR), 243-277 (NFVT…EMMM), 285-319 (DVMV…NVVT), 320-346 (WNAL…MIRE), 350-384 (DDLT…GLEP), and 385-419 (KVDH…PNEV). The type E motif stretch occupies residues 420–495 (VLGSLLGSCS…IPGLSSIYVN (76 aa)). The type E(+) motif stretch occupies residues 496 to 526 (DSVHRFSSGDRSHPRTKEIYLKLNEVIERIR). Positions 527 to 623 (SAGYVPDVSG…GGSCSCSDYW (97 aa)) are type DYW motif.

This sequence belongs to the PPR family. PCMP-H subfamily.

The protein resides in the mitochondrion. The polypeptide is Pentatricopeptide repeat-containing protein At5g15340, mitochondrial (PCMP-H91) (Arabidopsis thaliana (Mouse-ear cress)).